The primary structure comprises 1111 residues: Receptor-type guanylate cyclase gcy-7 (1111 aa).

The N-terminal stretch at 1-24 (MKPFYSMSLVLFLVITLLPKPMFP) is a signal peptide. At 25 to 488 (QVATGTTGNV…CPKSFVDEYL (464 aa)) the chain is on the extracellular side. 8 N-linked (GlcNAc...) asparagine glycosylation sites follow: Asn-80, Asn-300, Asn-326, Asn-353, Asn-389, Asn-407, Asn-430, and Asn-441. A helical membrane pass occupies residues 489-509 (IWVIVAIVVLFLAITAAACGI). Residues 510–1111 (YFSIQARRQE…TLKSDEQLSD (602 aa)) are Cytoplasmic-facing. The Protein kinase domain occupies 536–838 (QINSKQKGKG…NDNLMDHVFN (303 aa)). Residues 542–550 (KGKGEHSVR) and Lys-568 contribute to the ATP site. In terms of domain architecture, Guanylate cyclase spans 896-1026 (TIFFSDVVQF…DAVNTASRME (131 aa)).

The protein belongs to the adenylyl cyclase class-4/guanylyl cyclase family. In terms of tissue distribution, expressed asymmetrically in ASE left (ASEL) sensory neuron. Expressed in excretory canal cell.

Its subcellular location is the cell membrane. The catalysed reaction is GTP = 3',5'-cyclic GMP + diphosphate. Its function is as follows. Guanylate cyclase involved in the production of the second messenger cGMP. Unlike other guanylate cyclases expressed in ASE neurons, may not play a role in chemotaxis responses toward salt ions in ASEL (ASE left) sensory neurons. In Caenorhabditis elegans, this protein is Receptor-type guanylate cyclase gcy-7.